Reading from the N-terminus, the 86-residue chain is Exodeoxyribonuclease 7 small subunit (86 aa).

It belongs to the XseB family. Heterooligomer composed of large and small subunits.

Its subcellular location is the cytoplasm. It catalyses the reaction Exonucleolytic cleavage in either 5'- to 3'- or 3'- to 5'-direction to yield nucleoside 5'-phosphates.. In terms of biological role, bidirectionally degrades single-stranded DNA into large acid-insoluble oligonucleotides, which are then degraded further into small acid-soluble oligonucleotides. This is Exodeoxyribonuclease 7 small subunit from Xanthomonas axonopodis pv. citri (strain 306).